Consider the following 838-residue polypeptide: Semaphorin-4G (838 aa).

A signal peptide spans 1-17 (MWGRLWPLLLSILTATA). Residues 18 to 675 (VPGPSLRRPS…GAQLAPDVRL (658 aa)) lie on the Extracellular side of the membrane. Residues 35–505 (RMTIPYEELS…APSGVIQLPL (471 aa)) enclose the Sema domain. 3 N-linked (GlcNAc...) asparagine glycosylation sites follow: N55, N111, and N126. C104 and C115 are oxidised to a cystine. 3 disulfides stabilise this stretch: C133–C142, C270–C377, and C294–C337. N-linked (GlcNAc...) asparagine glycosylation is present at N388. Residues 507–558 (SCSRYRSCYDCILARDPYCGWDPGTHACAAATTIANRTALIQDIERGNRGCE) enclose the PSI domain. 2 disulfide bridges follow: C508–C525 and C517–C534. N-linked (GlcNAc...) asparagine glycosylation is found at N542 and N598. The Ig-like C2-type domain maps to 567–649 (PPLKTRSVLR…RTLLASYSLT (83 aa)). The cysteines at positions 584 and 632 are disulfide-linked. The helical transmembrane segment at 676–696 (LYVLAIAALGGLCLILASSLL) threads the bilayer. Residues 697–838 (YVACLREGRR…LVEQLDESSV (142 aa)) lie on the Cytoplasmic side of the membrane. The interval 723–777 (SAVQLQTVSGQCPGEEDEGDDEGAGGLEGSCLQIIPGEGAPAPPPPPPPPPPAEL) is disordered. The span at 736-745 (GEEDEGDDEG) shows a compositional bias: acidic residues. The segment covering 763-775 (PAPPPPPPPPPPA) has biased composition (pro residues). S795 and S837 each carry phosphoserine.

The protein belongs to the semaphorin family. Interacts with PLXNB2.

It is found in the cell membrane. Cell surface receptor for PLXNB2. May play a role in axon guidance. This chain is Semaphorin-4G (SEMA4G), found in Homo sapiens (Human).